The chain runs to 192 residues: ER protein translocation subcomplex subunit sec67 (192 aa).

As to quaternary structure, component of the heterotetrameric Sec62/63complex composed of sec62, sec63, sec66 and sec72. The Sec62/63 complex associates with the Sec61 complex to form the Sec complex.

The protein localises to the cytoplasm. It localises to the nucleus. In terms of biological role, acts as a non-essential component of the Sec62/63 complex which is involved in SRP-independent post-translational translocation across the endoplasmic reticulum (ER) and functions together with the Sec61 complex and bip1 in a channel-forming translocon complex. A cycle of assembly and disassembly of Sec62/63 complex from sec61 may govern the activity of the translocon. sec72 may be involved in signal peptide recognition for a defined subset of leader peptides, or may increase the efficiency of unusual or 'difficult' secretory precursors to the translocation pore, it may be that this protein binds charged leader peptides to the membrane until they engage the translocation apparatus. The sequence is that of ER protein translocation subcomplex subunit sec67 (sec67) from Schizosaccharomyces pombe (strain 972 / ATCC 24843) (Fission yeast).